The sequence spans 612 residues: tRNA 5-methylaminomethyl-2-thiouridine biosynthesis bifunctional protein MnmC (612 aa).

The segment at 1-218 (MITFRGDGLY…KREILEASLE (218 aa)) is tRNA (mnm(5)s(2)U34)-methyltransferase. Residues 244-612 (IGAGVAGLAA…VRKLKRGLVR (369 aa)) form an FAD-dependent cmnm(5)s(2)U34 oxidoreductase region.

The protein in the N-terminal section; belongs to the methyltransferase superfamily. tRNA (mnm(5)s(2)U34)-methyltransferase family. It in the C-terminal section; belongs to the DAO family. The cofactor is FAD.

It localises to the cytoplasm. The catalysed reaction is 5-aminomethyl-2-thiouridine(34) in tRNA + S-adenosyl-L-methionine = 5-methylaminomethyl-2-thiouridine(34) in tRNA + S-adenosyl-L-homocysteine + H(+). Functionally, catalyzes the last two steps in the biosynthesis of 5-methylaminomethyl-2-thiouridine (mnm(5)s(2)U) at the wobble position (U34) in tRNA. Catalyzes the FAD-dependent demodification of cmnm(5)s(2)U34 to nm(5)s(2)U34, followed by the transfer of a methyl group from S-adenosyl-L-methionine to nm(5)s(2)U34, to form mnm(5)s(2)U34. The polypeptide is tRNA 5-methylaminomethyl-2-thiouridine biosynthesis bifunctional protein MnmC (Campylobacter fetus subsp. fetus (strain 82-40)).